The primary structure comprises 201 residues: Recombination protein RecR (201 aa).

The C4-type zinc-finger motif lies at 60–75 (CKTCGNIDTQNPCTVC). The Toprim domain occupies 83–178 (AIIVVVADVA…KVTRLAHGVP (96 aa)).

The protein belongs to the RecR family.

Functionally, may play a role in DNA repair. It seems to be involved in an RecBC-independent recombinational process of DNA repair. It may act with RecF and RecO. The sequence is that of Recombination protein RecR from Rhodopseudomonas palustris (strain BisA53).